A 164-amino-acid polypeptide reads, in one-letter code: Aspartate carbamoyltransferase regulatory chain (164 aa).

Residues cysteine 116, cysteine 121, cysteine 146, and cysteine 149 each contribute to the Zn(2+) site.

The protein belongs to the PyrI family. Contains catalytic and regulatory chains. Requires Zn(2+) as cofactor.

In terms of biological role, involved in allosteric regulation of aspartate carbamoyltransferase. In Staphylothermus marinus (strain ATCC 43588 / DSM 3639 / JCM 9404 / F1), this protein is Aspartate carbamoyltransferase regulatory chain.